A 119-amino-acid chain; its full sequence is Holo-[acyl-carrier-protein] synthase (119 aa).

The Mg(2+) site is built by D6 and E51.

It belongs to the P-Pant transferase superfamily. AcpS family. The cofactor is Mg(2+).

Its subcellular location is the cytoplasm. It catalyses the reaction apo-[ACP] + CoA = holo-[ACP] + adenosine 3',5'-bisphosphate + H(+). In terms of biological role, transfers the 4'-phosphopantetheine moiety from coenzyme A to a Ser of acyl-carrier-protein. The sequence is that of Holo-[acyl-carrier-protein] synthase from Sulfurovum sp. (strain NBC37-1).